Here is a 491-residue protein sequence, read N- to C-terminus: Protein nucleotidyltransferase YdiU (491 aa).

Residues Gly92, Gly94, Arg95, Lys115, Asp127, Gly128, Arg178, and Arg185 each coordinate ATP. Asp254 serves as the catalytic Proton acceptor. Mg(2+) is bound by residues Asn255 and Asp264. ATP is bound at residue Asp264.

The protein belongs to the SELO family. The cofactor is Mg(2+). Requires Mn(2+) as cofactor.

The enzyme catalyses L-seryl-[protein] + ATP = 3-O-(5'-adenylyl)-L-seryl-[protein] + diphosphate. The catalysed reaction is L-threonyl-[protein] + ATP = 3-O-(5'-adenylyl)-L-threonyl-[protein] + diphosphate. It catalyses the reaction L-tyrosyl-[protein] + ATP = O-(5'-adenylyl)-L-tyrosyl-[protein] + diphosphate. It carries out the reaction L-histidyl-[protein] + UTP = N(tele)-(5'-uridylyl)-L-histidyl-[protein] + diphosphate. The enzyme catalyses L-seryl-[protein] + UTP = O-(5'-uridylyl)-L-seryl-[protein] + diphosphate. The catalysed reaction is L-tyrosyl-[protein] + UTP = O-(5'-uridylyl)-L-tyrosyl-[protein] + diphosphate. Functionally, nucleotidyltransferase involved in the post-translational modification of proteins. It can catalyze the addition of adenosine monophosphate (AMP) or uridine monophosphate (UMP) to a protein, resulting in modifications known as AMPylation and UMPylation. The protein is Protein nucleotidyltransferase YdiU of Pseudarthrobacter chlorophenolicus (strain ATCC 700700 / DSM 12829 / CIP 107037 / JCM 12360 / KCTC 9906 / NCIMB 13794 / A6) (Arthrobacter chlorophenolicus).